We begin with the raw amino-acid sequence, 279 residues long: H-2 class II histocompatibility antigen gamma chain (279 aa).

A disordered region spans residues 1–23; it reads MDDQRDLISNHEQLPILGNRPRE. Residues 1-29 lie on the Cytoplasmic side of the membrane; sequence MDDQRDLISNHEQLPILGNRPREPERCSR. Ser-9 is modified (phosphoserine). The helical; Signal-anchor for type II membrane protein transmembrane segment at 30 to 55 threads the bilayer; the sequence is GALYTGVSVLVALLLAGQATTAYFLY. At 56-279 the chain is on the extracellular side; it reads QQQGRLDKLT…TRQELGQVTL (224 aa). N-linked (GlcNAc...) asparagine glycosylation is found at Asn-113 and Asn-119. The region spanning 193–254 is the Thyroglobulin type-1 domain; the sequence is LTKCQEEVSH…HTKSRGRHNC (62 aa). Cystine bridges form between Cys-196–Cys-215, Cys-226–Cys-233, and Cys-235–Cys-254. A glycan (O-linked (Xyl...) (chondroitin sulfate) serine) is linked at Ser-265.

As to quaternary structure, nonamer composed of three alpha/beta/gamma heterotrimers. Interacts with CD44; this complex is essential for the MIF-induced signaling cascade that results in B cell survival. Interacts with the mature form of CTSL; the complex survive in neutral pH environment. Expressed in thymus and lymph noodes. Expressed by antigen-presenting cells (APCs). As to expression, expressed in thymus and lymph noodes.

The protein resides in the late endosome. Its subcellular location is the lysosome. It is found in the cell membrane. The protein localises to the endoplasmic reticulum membrane. It localises to the golgi apparatus. The protein resides in the trans-Golgi network. Its subcellular location is the endosome. It is found in the secreted. Its function is as follows. Plays a critical role in MHC class II antigen processing by stabilizing peptide-free class II alpha/beta heterodimers in a complex soon after their synthesis and directing transport of the complex from the endoplasmic reticulum to compartments where peptide loading of class II takes place. Enhance also the stimulation of T-cell responses through interaction with CD44. In terms of biological role, stabilizes the conformation of mature CTSL by binding to its active site and serving as a chaperone to help maintain a pool of mature enzyme in endocytic compartments and extracellular space of antigen-presenting cells (APCs). Functionally, binds to the peptide-binding site of MHC class II alpha/beta heterodimers forming an alpha-beta-CLIP complex, thereby preventing the loading of antigenic peptides to the MHC class II complex until its release by HLA-DM in the endosome. The protein is H-2 class II histocompatibility antigen gamma chain of Mus musculus (Mouse).